A 490-amino-acid chain; its full sequence is Subtilisin-like protease 8 (490 aa).

Residues 1-26 (MKGLLSLSVLPVLAYASPMIVDSIHQ) form the signal peptide. Positions 27-134 (NAAPILSSTN…YIERDSEVHT (108 aa)) are excised as a propeptide. The 92-residue stretch at 43–134 (SYIVVFKKGV…YIERDSEVHT (92 aa)) folds into the Inhibitor I9 domain. Positions 144–450 (PWGLARISHR…GGSDDYKKII (307 aa)) constitute a Peptidase S8 domain. Catalysis depends on charge relay system residues aspartate 180 and histidine 212. N-linked (GlcNAc...) asparagine glycosylation is present at asparagine 282. Serine 378 functions as the Charge relay system in the catalytic mechanism. Asparagine 456 is a glycosylation site (N-linked (GlcNAc...) asparagine).

This sequence belongs to the peptidase S8 family.

The protein resides in the secreted. Its function is as follows. Secreted subtilisin-like serine protease with keratinolytic activity that contributes to pathogenicity. In Trichophyton verrucosum (strain HKI 0517), this protein is Subtilisin-like protease 8 (SUB8).